We begin with the raw amino-acid sequence, 289 residues long: MPSLKDLKNRIGSVKNTRKITKAMQMVAAAKLRRAQEAAEAARPFAERMTAVMTGLAGSVGSSESAPRLLAGTGSDKVHLLVVMTAERGLCGGFNSSIVRLARAHAAKLLTQGKTVKILTVGKKGREQLRRDLGQHFIGHVDLSEVKRMGYPVAQGIARDLLDRFDKGEFDVATIFFARFQSVISQVPTAQQVIPAVFEGEGEVSSLYDYEPSEEGVLADLLPRGVATQIFTALLENGASEQGARMSAMDNATRNAGDMINRLTIEYNRSRQAAITKELIEIISGAEAL.

This sequence belongs to the ATPase gamma chain family. In terms of assembly, F-type ATPases have 2 components, CF(1) - the catalytic core - and CF(0) - the membrane proton channel. CF(1) has five subunits: alpha(3), beta(3), gamma(1), delta(1), epsilon(1). CF(0) has three main subunits: a, b and c.

It is found in the cell inner membrane. In terms of biological role, produces ATP from ADP in the presence of a proton gradient across the membrane. The gamma chain is believed to be important in regulating ATPase activity and the flow of protons through the CF(0) complex. The polypeptide is ATP synthase gamma chain (Cereibacter sphaeroides (strain ATCC 17029 / ATH 2.4.9) (Rhodobacter sphaeroides)).